A 117-amino-acid polypeptide reads, in one-letter code: Appetite-regulating hormone (117 aa).

The signal sequence occupies residues 1 to 23 (MPSLGTMCSLLLFSVLWVDLAMA). Serine 26 carries the O-decanoyl serine; alternate lipid modification. The O-hexanoyl serine; alternate moiety is linked to residue serine 26. Serine 26 carries O-octanoyl serine; alternate lipidation. The tract at residues 30 to 68 (PEHQKLQQRKESKKPPAKLQPRALEGSLGPEDTSQVEEA) is disordered. Basic and acidic residues predominate over residues 31 to 43 (EHQKLQQRKESKK). The propeptide at 52–75 (ALEGSLGPEDTSQVEEAEDELEIR) is removed in mature form. A Leucine amide modification is found at leucine 98. Positions 99–117 (GKFLQEVLWEDTNEALADE) are cleaved as a propeptide — removed in mature form.

Belongs to the motilin family. In terms of processing, O-octanoylated by GOAT/MBOAT4. O-octanoylation is essential for ghrelin activity. Post-translationally, amidation of Leu-98 is essential for obestatin activity.

Its subcellular location is the secreted. Functionally, ghrelin is the ligand for growth hormone secretagogue receptor type 1 (GHSR). Induces the release of growth hormone from the pituitary. Has an appetite-stimulating effect, induces adiposity and stimulates gastric acid secretion. Involved in growth regulation. Its function is as follows. Obestatin may be the ligand for GPR39. May have an appetite-reducing effect resulting in decreased food intake. May reduce gastric emptying activity and jejunal motility. The protein is Appetite-regulating hormone (GHRL) of Canis lupus familiaris (Dog).